Here is a 234-residue protein sequence, read N- to C-terminus: HTH-type transcriptional regulator SmoD (234 aa).

One can recognise an HTH gntR-type domain in the interval L8–V76. Residues E36–A55 constitute a DNA-binding region (H-T-H motif).

It localises to the cytoplasm. Functionally, probably regulates expression of genes involved in the sulfoquinovose monooxygenase (sulfo-SMO) pathway (smoABCDEFGHI). The chain is HTH-type transcriptional regulator SmoD from Agrobacterium fabrum (strain C58 / ATCC 33970) (Agrobacterium tumefaciens (strain C58)).